Here is a 511-residue protein sequence, read N- to C-terminus: Bifunctional purine biosynthesis protein PurH (511 aa).

Positions 1–145 (MKRRALVSVS…KNHQHVTVVV (145 aa)) constitute an MGS-like domain.

Belongs to the PurH family.

It catalyses the reaction (6R)-10-formyltetrahydrofolate + 5-amino-1-(5-phospho-beta-D-ribosyl)imidazole-4-carboxamide = 5-formamido-1-(5-phospho-D-ribosyl)imidazole-4-carboxamide + (6S)-5,6,7,8-tetrahydrofolate. The enzyme catalyses IMP + H2O = 5-formamido-1-(5-phospho-D-ribosyl)imidazole-4-carboxamide. The protein operates within purine metabolism; IMP biosynthesis via de novo pathway; 5-formamido-1-(5-phospho-D-ribosyl)imidazole-4-carboxamide from 5-amino-1-(5-phospho-D-ribosyl)imidazole-4-carboxamide (10-formyl THF route): step 1/1. It functions in the pathway purine metabolism; IMP biosynthesis via de novo pathway; IMP from 5-formamido-1-(5-phospho-D-ribosyl)imidazole-4-carboxamide: step 1/1. The sequence is that of Bifunctional purine biosynthesis protein PurH from Halalkalibacterium halodurans (strain ATCC BAA-125 / DSM 18197 / FERM 7344 / JCM 9153 / C-125) (Bacillus halodurans).